The primary structure comprises 147 residues: Transthyretin (147 aa).

A signal peptide spans 1–20; it reads MASHRLLLLCLAGLVFVSEA. Cysteine 30 carries the sulfocysteine modification. Residue lysine 35 participates in L-thyroxine binding. Glutamate 62 carries the post-translational modification 4-carboxyglutamate; in a patient with Moyamoya disease. A Phosphoserine modification is found at serine 72. Glutamate 74 provides a ligand contact to L-thyroxine. Asparagine 118 carries N-linked (GlcNAc...) asparagine glycosylation. Serine 137 is a binding site for L-thyroxine.

Belongs to the transthyretin family. Homotetramer. Dimer of dimers. In the homotetramer, subunits assemble around a central channel that can accommodate two ligand molecules. Interacts with RBP4. In terms of processing, not glycosylated under normal conditions. Following unfolding, caused for example by variant AMYLD1 'Gly-38', the cryptic Asn-118 site is exposed and glycosylated by STT3B-containing OST complex, leading to its degradation by the ER-associated degradation (ERAD) pathway. Sulfonation of the reactive cysteine Cys-30 enhances the stability of the native conformation of TTR, avoiding misassembly of the protein leading to amyloid formation. As to expression, detected in serum and cerebrospinal fluid (at protein level). Highly expressed in choroid plexus epithelial cells. Detected in retina pigment epithelium and liver.

Its subcellular location is the secreted. It localises to the cytoplasm. Its function is as follows. Thyroid hormone-binding protein. Probably transports thyroxine from the bloodstream to the brain. This Homo sapiens (Human) protein is Transthyretin (TTR).